A 166-amino-acid polypeptide reads, in one-letter code: Large ribosomal subunit protein uL18c (166 aa).

The N-terminal 44 residues, 1 to 44, are a transit peptide targeting the chloroplast; that stretch reads MAAATSLSFFHSTLASSSSSSVQQLSLPPKFVNFRPQTLPLIQA.

The protein belongs to the universal ribosomal protein uL18 family. As to quaternary structure, component of the chloroplast large ribosomal subunit (LSU). Mature 70S chloroplast ribosomes of higher plants consist of a small (30S) and a large (50S) subunit. The 30S small subunit contains 1 molecule of ribosomal RNA (16S rRNA) and 24 different proteins. The 50S large subunit contains 3 rRNA molecules (23S, 5S and 4.5S rRNA) and 33 different proteins.

It is found in the plastid. The protein resides in the chloroplast. Its function is as follows. Component of the chloroplast ribosome (chloro-ribosome), a dedicated translation machinery responsible for the synthesis of chloroplast genome-encoded proteins, including proteins of the transcription and translation machinery and components of the photosynthetic apparatus. This is Large ribosomal subunit protein uL18c (RPL18) from Spinacia oleracea (Spinach).